Here is a 258-residue protein sequence, read N- to C-terminus: MVGILPLCCSGCVPSLCCSSYVPSVAPTAAHSVRVPHSAGHCGQRVLACSLPQVFLKPWIFVEHFSSWLSLELFSFLRYLGTLLCACGHRLREGLLLPCLLGVGSWLLFNNWTGGSWFSLHLQQVSLSQGSHVAAFLPEAIGPGVPVPVSGESTSAQQSHAGWQLSAEADACPSVLYSEVLEWNKNINTYTSFHDFCLILGIFLFCFVLAVIGLPYIKPGLSLSVALLWQSLILLSSLVQQDSQVHTWGCLFSTFTST.

The signal sequence occupies residues 1 to 19; the sequence is MVGILPLCCSGCVPSLCCS. Helical transmembrane passes span 94 to 114, 197 to 217, and 219 to 239; these read GLLL…NWTG, CLIL…LPYI, and PGLS…SSLV.

Its subcellular location is the membrane. This is an uncharacterized protein from Homo sapiens (Human).